Reading from the N-terminus, the 334-residue chain is Siroheme decarboxylase (334 aa).

His-93 is a catalytic residue.

Belongs to the Ahb/Nir family.

The catalysed reaction is siroheme + 2 H(+) = 12,18-didecarboxysiroheme + 2 CO2. Its pathway is porphyrin-containing compound metabolism. In terms of biological role, involved in heme d1 biosynthesis. Catalyzes the decarboxylation of siroheme into didecarboxysiroheme. Siroheme is probably decarboxylated to monodecarboxysiroheme, which is in turn decarboxylated to didecarboxysiroheme. The sequence is that of Siroheme decarboxylase from Hydrogenobacter thermophilus (strain DSM 6534 / IAM 12695 / TK-6).